The chain runs to 334 residues: Syntaxin-18 (334 aa).

The Cytoplasmic segment spans residues 1–308 (MAVDITLLFR…EDIREAIKNN (308 aa)). Disordered stretches follow at residues 29–50 (GGAD…GDFS) and 166–225 (LSKL…GEDE). Composition is skewed to basic and acidic residues over residues 33-50 (GSRD…GDFS), 166-186 (LSKL…EKSS), and 193-207 (SEEK…EKPL). The t-SNARE coiled-coil homology domain maps to 242-304 (IGEMNSLFDE…KEGNEDIREA (63 aa)). The helical; Anchor for type IV membrane protein transmembrane segment at 309-329 (AGFRVWILFFLVMCSFSLLFL) threads the bilayer. Residues 330 to 334 (DWYDS) are Vesicular-facing.

It belongs to the syntaxin family. In terms of assembly, component of a SNARE complex consisting of STX18, USE1L, BNIP1/SEC20L, and SEC22B. RINT1/TIP20L and ZW10 are associated with the complex through interaction with BNIP1/SEC20L. Interacts directly with USE1L and BNIP1/SEC20L.

Its subcellular location is the endoplasmic reticulum membrane. The protein resides in the golgi apparatus membrane. Its function is as follows. Syntaxin that may be involved in targeting and fusion of Golgi-derived retrograde transport vesicles with the ER. This chain is Syntaxin-18 (Stx18), found in Rattus norvegicus (Rat).